The following is a 173-amino-acid chain: Crossover junction endodeoxyribonuclease RuvC (173 aa).

Catalysis depends on residues aspartate 8, glutamate 69, and aspartate 141. Mg(2+) contacts are provided by aspartate 8, glutamate 69, and aspartate 141.

It belongs to the RuvC family. As to quaternary structure, homodimer which binds Holliday junction (HJ) DNA. The HJ becomes 2-fold symmetrical on binding to RuvC with unstacked arms; it has a different conformation from HJ DNA in complex with RuvA. In the full resolvosome a probable DNA-RuvA(4)-RuvB(12)-RuvC(2) complex forms which resolves the HJ. It depends on Mg(2+) as a cofactor.

It localises to the cytoplasm. It catalyses the reaction Endonucleolytic cleavage at a junction such as a reciprocal single-stranded crossover between two homologous DNA duplexes (Holliday junction).. The RuvA-RuvB-RuvC complex processes Holliday junction (HJ) DNA during genetic recombination and DNA repair. Endonuclease that resolves HJ intermediates. Cleaves cruciform DNA by making single-stranded nicks across the HJ at symmetrical positions within the homologous arms, yielding a 5'-phosphate and a 3'-hydroxyl group; requires a central core of homology in the junction. The consensus cleavage sequence is 5'-(A/T)TT(C/G)-3'. Cleavage occurs on the 3'-side of the TT dinucleotide at the point of strand exchange. HJ branch migration catalyzed by RuvA-RuvB allows RuvC to scan DNA until it finds its consensus sequence, where it cleaves and resolves the cruciform DNA. This Xylella fastidiosa (strain 9a5c) protein is Crossover junction endodeoxyribonuclease RuvC.